The following is a 432-amino-acid chain: Trigger factor (432 aa).

A PPIase FKBP-type domain is found at 161-246; that stretch reads GTRATINFVG…VVKVEARELP (86 aa).

This sequence belongs to the FKBP-type PPIase family. Tig subfamily.

It is found in the cytoplasm. The catalysed reaction is [protein]-peptidylproline (omega=180) = [protein]-peptidylproline (omega=0). Its function is as follows. Involved in protein export. Acts as a chaperone by maintaining the newly synthesized protein in an open conformation. Functions as a peptidyl-prolyl cis-trans isomerase. The protein is Trigger factor of Aliivibrio fischeri (strain MJ11) (Vibrio fischeri).